We begin with the raw amino-acid sequence, 104 residues long: Large ribosomal subunit protein uL24 (104 aa).

A disordered region spans residues arginine 82 to isoleucine 104. The span at lysine 93–isoleucine 104 shows a compositional bias: basic residues.

The protein belongs to the universal ribosomal protein uL24 family. In terms of assembly, part of the 50S ribosomal subunit.

One of two assembly initiator proteins, it binds directly to the 5'-end of the 23S rRNA, where it nucleates assembly of the 50S subunit. Its function is as follows. One of the proteins that surrounds the polypeptide exit tunnel on the outside of the subunit. The chain is Large ribosomal subunit protein uL24 from Corynebacterium glutamicum (strain R).